Consider the following 119-residue polypeptide: Protein Wnt-4 (119 aa).

Ser1 carries O-palmitoleoyl serine; by PORCN lipidation. 2 cysteine pairs are disulfide-bonded: Cys69–Cys100 and Cys85–Cys95. Residue Asn86 is glycosylated (N-linked (GlcNAc...) asparagine).

Belongs to the Wnt family. Palmitoleoylation is required for efficient binding to frizzled receptors. Depalmitoleoylation leads to Wnt signaling pathway inhibition.

The protein localises to the secreted. The protein resides in the extracellular space. Its subcellular location is the extracellular matrix. Its function is as follows. Ligand for members of the frizzled family of seven transmembrane receptors. Plays an important role in embryonic development. This Plestiodon skiltonianus (Western skink) protein is Protein Wnt-4 (WNT-4).